Reading from the N-terminus, the 317-residue chain is Melanocyte-stimulating hormone receptor (317 aa).

Residues 1–37 are Extracellular-facing; sequence MPMQGAQRRLLGSLNSTPTATPNLGLAANHTGAPCLE. Asparagine 29 carries N-linked (GlcNAc...) asparagine glycosylation. A helical membrane pass occupies residues 38 to 63; that stretch reads VSIPDGLFLSLGLVSLVENVLVVAAI. At 64–72 the chain is on the cytoplasmic side; that stretch reads AKNRNLHSP. A helical transmembrane segment spans residues 73 to 93; the sequence is MYCFICCLALSDLLVSGSNML. Residues 94-118 are Extracellular-facing; it reads EMAVILLLEAGALATRASVVQQLQN. Residues 119 to 140 traverse the membrane as a helical segment; the sequence is TIDVLTCSSMLCSLCFLGAIAV. Residues 141-163 are Cytoplasmic-facing; it reads DRYVSIFYALRYHSIVTLPRARR. A helical membrane pass occupies residues 164–183; the sequence is AIAAIWVASVLSSTLFIAYC. Residues 184–191 are Extracellular-facing; the sequence is DHAAVLLC. Residues 192 to 211 form a helical membrane-spanning segment; the sequence is LVVFFLAMLVLMAVLYVHML. The Cytoplasmic segment spans residues 212 to 240; sequence ARACQHAQGITRLHKRQLPAHQGFGLRGA. The helical transmembrane segment at 241 to 266 threads the bilayer; sequence ATLTILLGIFFVCWGPFFLHLMLVVL. The Extracellular portion of the chain corresponds to 267–279; the sequence is CPQHLTCSCIFKN. The chain crosses the membrane as a helical span at residues 280 to 300; that stretch reads FKVFLTLIICNTIIDPLIYAF. At 301–317 the chain is on the cytoplasmic side; that stretch reads RSQELCRTLKEVLLCSW. A lipid anchor (S-palmitoyl cysteine) is attached at cysteine 315.

This sequence belongs to the G-protein coupled receptor 1 family. As to quaternary structure, interacts with MGRN1, but does not undergo MGRN1-mediated ubiquitination; this interaction competes with GNAS-binding and thus inhibits agonist-induced cAMP production. Interacts with OPN3; the interaction results in a decrease in MC1R-mediated cAMP signaling and ultimately a decrease in melanin production in melanocytes.

It localises to the cell membrane. In terms of biological role, receptor for MSH (alpha, beta and gamma) and ACTH. The activity of this receptor is mediated by G proteins which activate adenylate cyclase. Mediates melanogenesis, the production of eumelanin (black/brown) and phaeomelanin (red/yellow), via regulation of cAMP signaling in melanocytes. The protein is Melanocyte-stimulating hormone receptor (MC1R) of Alouatta sara (Bolivian red howler monkey).